A 287-amino-acid polypeptide reads, in one-letter code: Fructose-1,6-bisphosphatase class 1 (287 aa).

Residues Glu-67, Asp-87, Leu-89, and Asp-90 each contribute to the Mg(2+) site. Residues 90–93, Tyr-195, and Lys-225 contribute to the substrate site; that span reads DGSS. Glu-231 contributes to the Mg(2+) binding site.

This sequence belongs to the FBPase class 1 family. As to quaternary structure, homotetramer. Requires Mg(2+) as cofactor.

The protein localises to the cytoplasm. It catalyses the reaction beta-D-fructose 1,6-bisphosphate + H2O = beta-D-fructose 6-phosphate + phosphate. The protein operates within carbohydrate biosynthesis; gluconeogenesis. This is Fructose-1,6-bisphosphatase class 1 from Halobacterium salinarum (strain ATCC 29341 / DSM 671 / R1).